A 296-amino-acid polypeptide reads, in one-letter code: Ribosomal RNA small subunit methyltransferase A (296 aa).

The span at 1 to 11 (MERSHVGRDCG) shows a compositional bias: basic and acidic residues. The disordered stretch occupies residues 1-24 (MERSHVGRDCGSRSSPRAFSVPTS). The segment covering 12–24 (SRSSPRAFSVPTS) has biased composition (polar residues). Residues Asn-43, Leu-45, Gly-70, Glu-91, Asp-113, and Asn-135 each coordinate S-adenosyl-L-methionine.

It belongs to the class I-like SAM-binding methyltransferase superfamily. rRNA adenine N(6)-methyltransferase family. RsmA subfamily.

It localises to the cytoplasm. The catalysed reaction is adenosine(1518)/adenosine(1519) in 16S rRNA + 4 S-adenosyl-L-methionine = N(6)-dimethyladenosine(1518)/N(6)-dimethyladenosine(1519) in 16S rRNA + 4 S-adenosyl-L-homocysteine + 4 H(+). Functionally, specifically dimethylates two adjacent adenosines (A1518 and A1519) in the loop of a conserved hairpin near the 3'-end of 16S rRNA in the 30S particle. May play a critical role in biogenesis of 30S subunits. The sequence is that of Ribosomal RNA small subunit methyltransferase A from Salinibacter ruber (strain DSM 13855 / M31).